The primary structure comprises 256 residues: L-erythrulose-1-phosphate isomerase (256 aa).

H96 serves as the catalytic Electrophile. The active-site Proton acceptor is the E169. Substrate-binding residues include G175 and S212.

This sequence belongs to the triosephosphate isomerase family. In terms of assembly, homodimer.

It is found in the cytoplasm. It catalyses the reaction L-erythrulose 1-phosphate = D-erythrulose 4-phosphate. The protein operates within carbohydrate metabolism; erythritol degradation. Catalyzes the isomerization of D-erythrulose-4P to L-erythrulose-1P. Involved in the degradation pathway of erythritol, that allows B.abortus to grow on this compound as the sole carbon source. This Brucella abortus (strain 2308) protein is L-erythrulose-1-phosphate isomerase.